Consider the following 662-residue polypeptide: Acetyl-coenzyme A synthetase (662 aa).

Residues 197–200 (RKGK) and T317 contribute to the CoA site. ATP-binding positions include 393–395 (GEP), 417–422 (DTWWQT), D510, and R525. S533 is a binding site for CoA. R536 is an ATP binding site. H549 and V552 together coordinate Mg(2+). At K623 the chain carries N6-acetyllysine.

The protein belongs to the ATP-dependent AMP-binding enzyme family. Requires Mg(2+) as cofactor. Acetylated. Deacetylation by the SIR2-homolog deacetylase activates the enzyme.

It carries out the reaction acetate + ATP + CoA = acetyl-CoA + AMP + diphosphate. Catalyzes the conversion of acetate into acetyl-CoA (AcCoA), an essential intermediate at the junction of anabolic and catabolic pathways. AcsA undergoes a two-step reaction. In the first half reaction, AcsA combines acetate with ATP to form acetyl-adenylate (AcAMP) intermediate. In the second half reaction, it can then transfer the acetyl group from AcAMP to the sulfhydryl group of CoA, forming the product AcCoA. In Helicobacter pylori (strain P12), this protein is Acetyl-coenzyme A synthetase.